The following is a 396-amino-acid chain: Acetate kinase (396 aa).

Asn8 is a binding site for Mg(2+). Lys15 lines the ATP pocket. Arg89 serves as a coordination point for substrate. The Proton donor/acceptor role is filled by Asp146. Residues 206–210 (HIGNG), 283–285 (DMR), and 331–335 (GMGEN) contribute to the ATP site. Residue Glu383 participates in Mg(2+) binding.

Belongs to the acetokinase family. Homodimer. The cofactor is Mg(2+). It depends on Mn(2+) as a cofactor.

It localises to the cytoplasm. It carries out the reaction acetate + ATP = acetyl phosphate + ADP. Its pathway is metabolic intermediate biosynthesis; acetyl-CoA biosynthesis; acetyl-CoA from acetate: step 1/2. Catalyzes the formation of acetyl phosphate from acetate and ATP. Can also catalyze the reverse reaction. In Streptococcus uberis (strain ATCC BAA-854 / 0140J), this protein is Acetate kinase.